Consider the following 226-residue polypeptide: Exopolysaccharide production protein ExoY (226 aa).

The helical transmembrane segment at 34–54 (VLAASVALLLFSPLFLLIMAL) threads the bilayer.

This sequence belongs to the bacterial sugar transferase family.

It localises to the cell membrane. Its pathway is glycan metabolism; exopolysaccharide biosynthesis. Needed for the addition of the first sugar (galactose) to the isoprenoid carrier. May function as a sugar transferase. The chain is Exopolysaccharide production protein ExoY (exoY) from Rhizobium meliloti (strain 1021) (Ensifer meliloti).